The sequence spans 424 residues: Tol-Pal system protein TolB (424 aa).

An N-terminal signal peptide occupies residues 1–20 (MKQFIVFILSLYTTLSWAVL).

Belongs to the TolB family. As to quaternary structure, the Tol-Pal system is composed of five core proteins: the inner membrane proteins TolA, TolQ and TolR, the periplasmic protein TolB and the outer membrane protein Pal. They form a network linking the inner and outer membranes and the peptidoglycan layer.

The protein localises to the periplasm. Part of the Tol-Pal system, which plays a role in outer membrane invagination during cell division and is important for maintaining outer membrane integrity. The polypeptide is Tol-Pal system protein TolB (Vesicomyosocius okutanii subsp. Calyptogena okutanii (strain HA)).